The primary structure comprises 393 residues: S-adenosylmethionine synthase (393 aa).

His-17 is an ATP binding site. Asp-19 is a binding site for Mg(2+). Glu-45 provides a ligand contact to K(+). L-methionine contacts are provided by Glu-58 and Gln-106. The interval 106-116 is flexible loop; that stretch reads QSAHIAQGVDA. ATP is bound by residues 171–173, 237–238, Asp-246, 252–253, Ala-269, and Lys-273; these read DAK, KF, and RK. Asp-246 serves as a coordination point for L-methionine. Lys-277 contacts L-methionine.

It belongs to the AdoMet synthase family. Homotetramer; dimer of dimers. The cofactor is Mg(2+). Requires K(+) as cofactor.

Its subcellular location is the cytoplasm. The catalysed reaction is L-methionine + ATP + H2O = S-adenosyl-L-methionine + phosphate + diphosphate. The protein operates within amino-acid biosynthesis; S-adenosyl-L-methionine biosynthesis; S-adenosyl-L-methionine from L-methionine: step 1/1. Its function is as follows. Catalyzes the formation of S-adenosylmethionine (AdoMet) from methionine and ATP. The overall synthetic reaction is composed of two sequential steps, AdoMet formation and the subsequent tripolyphosphate hydrolysis which occurs prior to release of AdoMet from the enzyme. In Jannaschia sp. (strain CCS1), this protein is S-adenosylmethionine synthase.